The following is a 292-amino-acid chain: Probable E3 ubiquitin-protein ligase RNF144A (292 aa).

Residues 16–236 (PLVSCKLCLG…YDKGPCRNKL (221 aa)) are TRIAD supradomain. Zn(2+) is bound by residues Cys-20, Cys-23, Cys-43, Cys-46, Cys-111, Cys-116, Cys-135, Cys-138, Cys-143, Cys-146, His-151, Cys-156, Cys-185, and Cys-188. The RING-type 1 zinc finger occupies 20 to 70 (CKLCLGEYTVEQMTTIAQCQCIFCTLCLKQYVELLIKEGLETAISCPDASC). An IBR-type zinc finger spans residues 91–156 (QKYKKLQFEK…KANWHPGQGC (66 aa)). The RING-type 2; atypical zinc finger occupies 185 to 214 (CPKCKVYIERDEGCAQMMCKNCKHAFCWYC). Residue Cys-198 is part of the active site. Zn(2+) contacts are provided by Cys-203, Cys-206, Cys-211, Cys-214, His-226, and Cys-232. Residues 250–270 (VVGIFAGFGLLLLVASPFLLL) traverse the membrane as a helical segment.

The protein belongs to the RBR family. RNF144 subfamily.

The protein localises to the membrane. It catalyses the reaction [E2 ubiquitin-conjugating enzyme]-S-ubiquitinyl-L-cysteine + [acceptor protein]-L-lysine = [E2 ubiquitin-conjugating enzyme]-L-cysteine + [acceptor protein]-N(6)-ubiquitinyl-L-lysine.. The protein operates within protein modification; protein ubiquitination. Its function is as follows. E3 ubiquitin-protein ligase which accepts ubiquitin from E2 ubiquitin-conjugating enzymes ube2l3 and ube2l6 in the form of a thioester and then directly transfers the ubiquitin to targeted substrates. The sequence is that of Probable E3 ubiquitin-protein ligase RNF144A (rnf144a) from Xenopus tropicalis (Western clawed frog).